The sequence spans 509 residues: ATP synthase subunit alpha (509 aa).

169–176 (GDRQTGKT) is a binding site for ATP.

It belongs to the ATPase alpha/beta chains family. F-type ATPases have 2 components, CF(1) - the catalytic core - and CF(0) - the membrane proton channel. CF(1) has five subunits: alpha(3), beta(3), gamma(1), delta(1), epsilon(1). CF(0) has three main subunits: a(1), b(2) and c(9-12). The alpha and beta chains form an alternating ring which encloses part of the gamma chain. CF(1) is attached to CF(0) by a central stalk formed by the gamma and epsilon chains, while a peripheral stalk is formed by the delta and b chains.

The protein resides in the cell inner membrane. The catalysed reaction is ATP + H2O + 4 H(+)(in) = ADP + phosphate + 5 H(+)(out). In terms of biological role, produces ATP from ADP in the presence of a proton gradient across the membrane. The alpha chain is a regulatory subunit. The protein is ATP synthase subunit alpha of Brucella suis biovar 1 (strain 1330).